Reading from the N-terminus, the 81-residue chain is Costars family protein ABRACL (81 aa).

This sequence belongs to the costars family.

The sequence is that of Costars family protein ABRACL from Salmo salar (Atlantic salmon).